Consider the following 598-residue polypeptide: Probable transporter mch1 (598 aa).

Residues 1-49 form a disordered region; that stretch reads MASPTPAPRPDQISASTPLLQSDSTSSCASSIRSLSPSRRRHRNGRTSP. Positions 22 to 37 are enriched in low complexity; that stretch reads SDSTSSCASSIRSLSP. N-linked (GlcNAc...) asparagine glycosylation occurs at N57. The next 6 membrane-spanning stretches (helical) occupy residues 63–83, 96–116, 122–142, 164–184, 202–222, and 241–261; these read ALLS…GHIF, GLSS…GYMC, GPLS…AAGV, LAYA…CSMY, GLAL…QSQL, and VFHF…LGTF. A disordered region spans residues 315–334; sequence AGILDPSKPDNDSDSEEEDD. A glycan (N-linked (GlcNAc...) asparagine) is linked at N325. Transmembrane regions (helical) follow at residues 355-375, 405-425, 453-473, 486-506, 516-536, and 565-585; these read HTMW…EAFI, IVGI…DLLA, FLLF…SGWI, LVGA…TVIW, GIVA…YSAV, and SAFW…LWAW.

It belongs to the major facilitator superfamily.

Its subcellular location is the vacuole membrane. In terms of biological role, probable transporter. The protein is Probable transporter mch1 (mch1) of Neurospora crassa (strain ATCC 24698 / 74-OR23-1A / CBS 708.71 / DSM 1257 / FGSC 987).